The primary structure comprises 1998 residues: Histone acetyltransferase KAT6A (1998 aa).

Positions 1 to 77 (MVKLANPLYT…LNSYKDPDNP (77 aa)) constitute an SAMD1-like winged helix (WH) domain. Positions 1 to 144 (MVKLANPLYT…CGGTAASGFH (144 aa)) are required for activation of RUNX1-1. The tract at residues 52-166 (ELSVKDGTIL…HGRLLKDGPL (115 aa)) is required for nuclear localization. Residues 72-93 (KDPDNPGRIALPKPRNHGKLDN) form a disordered region. An H15 domain is found at 95 to 171 (QSVDWNKLLK…KDGPLYRLNT (77 aa)). The tract at residues 144 to 662 (HQQLRLAIKR…RKGYGRFLID (519 aa)) is interaction with PML. Lys172 carries the N6-acetyllysine modification. PHD-type zinc fingers lie at residues 199–258 (DKPV…LRWQ) and 255–306 (LRWQ…GMWI). The tract at residues 312–662 (PRKKGRKLLQ…RKGYGRFLID (351 aa)) is interaction with RUNX1-1. The tract at residues 336 to 377 (GRPKNRLKKQSTVSKGPFSKVRTGPGRGRKRKITVSSQSASS) is disordered. N6-acetyllysine is present on residues Lys350 and Lys355. A Phosphothreonine; by PKB/AKT1 modification is found at Thr369. The residue at position 419 (Ser419) is a Phosphoserine. Residues 440 to 464 (KGNRKSSTSHWPTDNQDGWESKQES) are disordered. Over residues 444–457 (KSSTSHWPTDNQDG) the composition is skewed to polar residues. Position 471 is a phosphoserine (Ser471). The catalytic stretch occupies residues 486–776 (IQEQALQKVG…VDPECLRWTP (291 aa)). One can recognise an MYST-type HAT domain in the interval 502-776 (PQVRCPSVIE…VDPECLRWTP (275 aa)). The tract at residues 505-808 (RCPSVIEFGK…EPQGQERELE (304 aa)) is mediates interaction with BRPF1, required for histone H3 acetyltransferase activity. The C2HC MYST-type zinc-finger motif lies at 535-560 (LYLCEFCLKYMKSRTILQQHMKKCGW). Lys602 is subject to N6-acetyllysine; by autocatalysis. Residues 643–647 (SCIMI) and 652–658 (QRKGYGR) each bind acetyl-CoA. The active-site Proton donor/acceptor is Glu678. Residue Ser682 coordinates acetyl-CoA. The interval 783–947 (VVSEEEDEEA…RFSESADLWR (165 aa)) is disordered. Residue Ser785 is modified to Phosphoserine. A compositionally biased stretch (acidic residues) spans 785–797 (SEEEDEEADDGEK). Over residues 798-840 (EEPQGQERELETRERVGKSVSRENKDQDSSSLIESEKKPEVKE) the composition is skewed to basic and acidic residues. Lys815 carries the N6-acetyllysine modification. Residue Lys835 forms a Glycyl lysine isopeptide (Lys-Gly) (interchain with G-Cter in SUMO2) linkage. The span at 865 to 874 (RRGRCGRKNR) shows a compositional bias: basic residues. Over residues 875-886 (KTQERFGDKDSK) the composition is skewed to basic and acidic residues. A Phosphotyrosine modification is found at Tyr900. The segment covering 903 to 916 (CEEKSAASRERYTE) has biased composition (basic and acidic residues). Phosphoserine is present on residues Ser940 and Ser953. Residues 982 to 1079 (GFSESSEEEE…EEEEDENELF (98 aa)) are disordered. An N6-acetyllysine modification is found at Lys1006. The segment covering 1008–1029 (TLKRKKPILHRRRRVRKRKHHN) has biased composition (basic residues). Over residues 1030–1041 (SSVVTETISETT) the composition is skewed to low complexity. Acidic residues-rich tracts occupy residues 1042 to 1052 (EVLDEPFEDSD) and 1064 to 1077 (FEIE…DENE). Phosphoserine occurs at positions 1088, 1089, and 1114. Disordered regions lie at residues 1096-1175 (QASS…PGFK), 1195-1436 (PIKP…EGAY), 1450-1567 (QSYT…STMG), and 1630-1702 (TCVV…CSMN). Positions 1106–1119 (DEEEEEEESDDADD) are enriched in acidic residues. Residues 1135–1146 (NSASLEPDTSTP) are compositionally biased toward polar residues. Residues 1147-1173 (MKKKKGWPKGKSRKPIHWKKRPGRKPG) are compositionally biased toward basic residues. Basic and acidic residues predominate over residues 1203–1228 (RTQESEELVEVKEGLVEERKEEMHTE). Composition is skewed to acidic residues over residues 1229–1240 (ADEEAEEEEDAA) and 1281–1298 (EEPQ…DEVT). Basic and acidic residues-rich tracts occupy residues 1316–1333 (HLDS…ARED), 1351–1360 (DSRENAKDKD), and 1392–1413 (DSNT…HSEL). Residues 1472-1496 (HNSPISSIPSHPSQSVRSVSSPSMP) are compositionally biased toward low complexity. Positions 1501–1522 (GYTQISPEQGSLSAPSMQNMET) are enriched in polar residues. The segment at 1510-1635 (GSLSAPSMQN…KSPQTCVVER (126 aa)) is interaction with RUNX1-2. Residues 1510–1735 (GSLSAPSMQN…YERIPGDFGA (226 aa)) form an interaction with PML region. Residues 1527-1541 (DVPSVSDHSQQVVDS) are compositionally biased toward low complexity. Residues 1549–1567 (IESTTENYENPSSYDSTMG) are compositionally biased toward polar residues. Composition is skewed to pro residues over residues 1639-1658 (NQQP…PQPQ) and 1665-1693 (PQPP…PQQQ). Positions 1907-1942 (SMNMNTLNAMNSYRMTQPMMNSSYHSNPAYMNQTAQ) are required for activation of RUNX1-2.

Belongs to the MYST (SAS/MOZ) family. In terms of assembly, component of the MOZ/MORF complex composed at least of ING5, KAT6A, KAT6B, MEAF6 and one of BRPF1, BRD1/BRPF2 and BRPF3. Interacts with RUNX1; phosphorylation of RUNX1 enhances the interaction. Interacts with RUNX2. Interacts with p53/TP53. Interacts with PML and this interaction positively regulates its acetylation activity towards p53/TP53. In terms of processing, autoacetylated. Autoacetylation at Lys-602 is required for proper function. Post-translationally, phosphorylation at Thr-369 by PKB/AKT1 inhibits its interaction with PML and negatively regulates its acetylation activity towards p53/TP53.

Its subcellular location is the nucleus. The protein localises to the nucleolus. It localises to the nucleoplasm. The protein resides in the PML body. The catalysed reaction is L-lysyl-[protein] + acetyl-CoA = N(6)-acetyl-L-lysyl-[protein] + CoA + H(+). Its function is as follows. Histone acetyltransferase that acetylates lysine residues in histone H3 and histone H4 (in vitro). Component of the MOZ/MORF complex which has a histone H3 acetyltransferase activity. May act as a transcriptional coactivator for RUNX1 and RUNX2. Acetylates p53/TP53 at 'Lys-120' and 'Lys-382' and controls its transcriptional activity via association with PML. The protein is Histone acetyltransferase KAT6A (Kat6a) of Rattus norvegicus (Rat).